Here is a 430-residue protein sequence, read N- to C-terminus: Enolase (430 aa).

Residue Gln-163 coordinates (2R)-2-phosphoglycerate. Glu-205 serves as the catalytic Proton donor. Asp-242, Glu-287, and Asp-314 together coordinate Mg(2+). Positions 339, 368, 369, and 390 each coordinate (2R)-2-phosphoglycerate. The Proton acceptor role is filled by Lys-339.

The protein belongs to the enolase family. Mg(2+) serves as cofactor.

The protein localises to the cytoplasm. Its subcellular location is the secreted. The protein resides in the cell surface. The catalysed reaction is (2R)-2-phosphoglycerate = phosphoenolpyruvate + H2O. It participates in carbohydrate degradation; glycolysis; pyruvate from D-glyceraldehyde 3-phosphate: step 4/5. Its function is as follows. Catalyzes the reversible conversion of 2-phosphoglycerate (2-PG) into phosphoenolpyruvate (PEP). It is essential for the degradation of carbohydrates via glycolysis. This is Enolase from Bacillus pumilus (strain SAFR-032).